Here is a 325-residue protein sequence, read N- to C-terminus: Putative gluconeogenesis factor (325 aa).

Belongs to the gluconeogenesis factor family.

It localises to the cytoplasm. Required for morphogenesis under gluconeogenic growth conditions. This Streptococcus pyogenes serotype M1 protein is Putative gluconeogenesis factor.